We begin with the raw amino-acid sequence, 479 residues long: MMSSLSDLETHASELTSAVKTIISQCPRQNAASRSRTQPLITSSASKEAHRAQQSILSTISGLQKLLTSPTDFLHHLAVQNQLLACLQWLGEFQVLACIPLTGTVPIKDVAELAGVPETHLSRIIRMTATAGFLDEPDPGQVAHSALSAPFVTKPSYLDAVMFLAGTIAPSALQMPTATQRFGASLRPNETAYNLALNNPATFASTSEQRPKLQRQWPAFLQYGTSDTDDRVTDLLSRLDHFRRGSISVVEVSARSLDRATTLANLYPSINITVQIASPAGPTAWSPAHPNPIRPPTPGGSHKHDDLRALTASTASTTPASSHNHTHTHTTNSIPQASNITIQHRLPTAPQPITSANLYILHLPSPSPTVPFASLATHILAELRSHLDILRSNPSATLILTPRPLPEPSAVHSEVEASARLRDLTLMQLANEREIELAEWINLLSNVSDSMGRLVVVNKIQSRESTVVLLEIRYQAYNR.

In terms of domain architecture, HTH iclR-type spans Leu77 to Leu147. Residues Ile107–Arg126 constitute a DNA-binding region (H-T-H motif). Disordered regions lie at residues Gly281 to Asp305 and Thr314 to Ser333. A compositionally biased stretch (pro residues) spans His289–Pro298. The span at Thr314–His323 shows a compositional bias: low complexity.

The protein resides in the nucleus. Transcriptional coactivator; part of the gene cluster that mediates the biosynthesis of monodictyphenone, a prenyl xanthone derivative. With mdpE, coregulates the production of monodictyphenone. The sequence is that of Monodictyphenone cluster transcriptional coactivator mdpA from Emericella nidulans (strain FGSC A4 / ATCC 38163 / CBS 112.46 / NRRL 194 / M139) (Aspergillus nidulans).